The sequence spans 203 residues: MIDYLRGTLTDIDHQYAVVEVHGVGYQVYCPNPYEFEKERDSVITIYTFQYVREDVIRLYGFRTKEKRSLFEKLLNVSGIGPKGALAILATGQPEHVIQAIEEEDEAFLVKFPGVGKKTARQIILDLKGKVDELHPGLFSQKEEQPKPHEKNDGNQALDEAMEALKALGYVEKELKKVKPKLEQETLTTDAYIKKALQLMLNR.

Positions 1-63 are domain I; the sequence is MIDYLRGTLT…EDVIRLYGFR (63 aa). Residues 64 to 142 are domain II; it reads TKEKRSLFEK…ELHPGLFSQK (79 aa). The tract at residues 143–152 is flexible linker; the sequence is EEQPKPHEKN. Residues 153-203 are domain III; it reads DGNQALDEAMEALKALGYVEKELKKVKPKLEQETLTTDAYIKKALQLMLNR.

It belongs to the RuvA family. In terms of assembly, homotetramer. Forms an RuvA(8)-RuvB(12)-Holliday junction (HJ) complex. HJ DNA is sandwiched between 2 RuvA tetramers; dsDNA enters through RuvA and exits via RuvB. An RuvB hexamer assembles on each DNA strand where it exits the tetramer. Each RuvB hexamer is contacted by two RuvA subunits (via domain III) on 2 adjacent RuvB subunits; this complex drives branch migration. In the full resolvosome a probable DNA-RuvA(4)-RuvB(12)-RuvC(2) complex forms which resolves the HJ.

The protein resides in the cytoplasm. In terms of biological role, the RuvA-RuvB-RuvC complex processes Holliday junction (HJ) DNA during genetic recombination and DNA repair, while the RuvA-RuvB complex plays an important role in the rescue of blocked DNA replication forks via replication fork reversal (RFR). RuvA specifically binds to HJ cruciform DNA, conferring on it an open structure. The RuvB hexamer acts as an ATP-dependent pump, pulling dsDNA into and through the RuvAB complex. HJ branch migration allows RuvC to scan DNA until it finds its consensus sequence, where it cleaves and resolves the cruciform DNA. This is Holliday junction branch migration complex subunit RuvA from Halalkalibacterium halodurans (strain ATCC BAA-125 / DSM 18197 / FERM 7344 / JCM 9153 / C-125) (Bacillus halodurans).